The primary structure comprises 930 residues: Translation initiation factor IF-2 (930 aa).

2 disordered regions span residues Glu-160 to Gly-179 and Ala-208 to Pro-301. The span at Ala-208–Asp-227 shows a compositional bias: basic and acidic residues. 2 stretches are compositionally biased toward basic residues: residues Gly-263 to Gly-272 and Lys-288 to Pro-301. Positions Thr-431–Thr-600 constitute a tr-type G domain. The segment at Gly-440 to Thr-447 is G1. Gly-440–Thr-447 is a GTP binding site. The segment at Gly-465–His-469 is G2. The segment at Asp-486–Gly-489 is G3. GTP is bound by residues Asp-486–His-490 and Asn-540–Asp-543. The tract at residues Asn-540–Asp-543 is G4. Residues Ser-576–His-578 form a G5 region.

Belongs to the TRAFAC class translation factor GTPase superfamily. Classic translation factor GTPase family. IF-2 subfamily.

It localises to the cytoplasm. One of the essential components for the initiation of protein synthesis. Protects formylmethionyl-tRNA from spontaneous hydrolysis and promotes its binding to the 30S ribosomal subunits. Also involved in the hydrolysis of GTP during the formation of the 70S ribosomal complex. The chain is Translation initiation factor IF-2 from Cellvibrio japonicus (strain Ueda107) (Pseudomonas fluorescens subsp. cellulosa).